The following is a 202-amino-acid chain: Dephospho-CoA kinase (202 aa).

Residues 3 to 201 enclose the DPCK domain; that stretch reads AIGLTGGIGS…QRYLGFAAAA (199 aa). 11–16 is a binding site for ATP; it reads GSGKTT.

It belongs to the CoaE family.

The protein resides in the cytoplasm. It catalyses the reaction 3'-dephospho-CoA + ATP = ADP + CoA + H(+). It functions in the pathway cofactor biosynthesis; coenzyme A biosynthesis; CoA from (R)-pantothenate: step 5/5. Its function is as follows. Catalyzes the phosphorylation of the 3'-hydroxyl group of dephosphocoenzyme A to form coenzyme A. This Burkholderia lata (strain ATCC 17760 / DSM 23089 / LMG 22485 / NCIMB 9086 / R18194 / 383) protein is Dephospho-CoA kinase.